Reading from the N-terminus, the 35-residue chain is Photosystem II reaction center protein T (35 aa).

Residues 3-23 traverse the membrane as a helical segment; the sequence is ALVYTFLLVSTLGIIFFAIFF.

The protein belongs to the PsbT family. In terms of assembly, PSII is composed of 1 copy each of membrane proteins PsbA, PsbB, PsbC, PsbD, PsbE, PsbF, PsbH, PsbI, PsbJ, PsbK, PsbL, PsbM, PsbT, PsbY, PsbZ, Psb30/Ycf12, at least 3 peripheral proteins of the oxygen-evolving complex and a large number of cofactors. It forms dimeric complexes.

The protein resides in the plastid. The protein localises to the chloroplast thylakoid membrane. Functionally, found at the monomer-monomer interface of the photosystem II (PS II) dimer, plays a role in assembly and dimerization of PSII. PSII is a light-driven water plastoquinone oxidoreductase, using light energy to abstract electrons from H(2)O, generating a proton gradient subsequently used for ATP formation. This Metasequoia glyptostroboides (Dawn redwood) protein is Photosystem II reaction center protein T.